A 244-amino-acid chain; its full sequence is tRNA (guanine-N(7)-)-methyltransferase (244 aa).

Residues glutamate 75, glutamate 100, aspartate 127, and aspartate 150 each contribute to the S-adenosyl-L-methionine site. Aspartate 150 is an active-site residue. Residues lysine 154, aspartate 186, and 223–226 (TRFE) each bind substrate.

It belongs to the class I-like SAM-binding methyltransferase superfamily. TrmB family.

The enzyme catalyses guanosine(46) in tRNA + S-adenosyl-L-methionine = N(7)-methylguanosine(46) in tRNA + S-adenosyl-L-homocysteine. The protein operates within tRNA modification; N(7)-methylguanine-tRNA biosynthesis. Its function is as follows. Catalyzes the formation of N(7)-methylguanine at position 46 (m7G46) in tRNA. The chain is tRNA (guanine-N(7)-)-methyltransferase from Xylella fastidiosa (strain M23).